The chain runs to 332 residues: Iron-utilization periplasmic protein (332 aa).

Positions 1–23 (MQFKHFKLATLAAALAFSANSFA) are cleaved as a signal peptide. Residues H32, E80, Y218, and Y219 each coordinate Fe cation.

Belongs to the bacterial solute-binding protein 1 family. The complex is composed of two ATP-binding proteins (FbpC), two transmembrane proteins (FbpB) and a solute-binding protein (FbpA).

It localises to the periplasm. Its function is as follows. Part of the ABC transporter complex FbpABC (TC 3.A.1.10.1) involved in Fe(3+) ions import. This protein specifically binds Fe(3+) and is involved in its transmembrane transport. The polypeptide is Iron-utilization periplasmic protein (fbpA) (Haemophilus influenzae (strain ATCC 51907 / DSM 11121 / KW20 / Rd)).